The chain runs to 212 residues: Peptide methionine sulfoxide reductase MsrA (212 aa).

The active site involves Cys52.

The protein belongs to the MsrA Met sulfoxide reductase family.

It catalyses the reaction L-methionyl-[protein] + [thioredoxin]-disulfide + H2O = L-methionyl-(S)-S-oxide-[protein] + [thioredoxin]-dithiol. The enzyme catalyses [thioredoxin]-disulfide + L-methionine + H2O = L-methionine (S)-S-oxide + [thioredoxin]-dithiol. Functionally, has an important function as a repair enzyme for proteins that have been inactivated by oxidation. Catalyzes the reversible oxidation-reduction of methionine sulfoxide in proteins to methionine. In Salmonella paratyphi A (strain AKU_12601), this protein is Peptide methionine sulfoxide reductase MsrA.